We begin with the raw amino-acid sequence, 154 residues long: Ribonuclease H (154 aa).

The RNase H type-1 domain occupies Met1–Leu142. Residues Asp10, Glu48, Asp70, and Asp134 each contribute to the Mg(2+) site.

This sequence belongs to the RNase H family. As to quaternary structure, monomer. Requires Mg(2+) as cofactor.

It is found in the cytoplasm. The catalysed reaction is Endonucleolytic cleavage to 5'-phosphomonoester.. Functionally, endonuclease that specifically degrades the RNA of RNA-DNA hybrids. This chain is Ribonuclease H, found in Tolumonas auensis (strain DSM 9187 / NBRC 110442 / TA 4).